Here is a 121-residue protein sequence, read N- to C-terminus: Nitrogenase-stabilizing/protective protein NifW (121 aa).

Belongs to the NifW family. As to quaternary structure, homotrimer; associates with NifD.

Functionally, may protect the nitrogenase Fe-Mo protein from oxidative damage. This is Nitrogenase-stabilizing/protective protein NifW from Methylacidiphilum infernorum (isolate V4) (Methylokorus infernorum (strain V4)).